The following is a 717-amino-acid chain: Serologically defined colon cancer antigen 8 homolog (717 aa).

Residues Ser4 and Ser28 each carry the phosphoserine modification. The tract at residues 84 to 115 (QTNKENETSPPRRRKLSPSRPSECDDGSMPTM) is disordered. Coiled coils occupy residues 129–168 (IHHL…KSQR), 221–278 (DANK…LAAS), 352–590 (EEAN…SEQY), and 622–712 (RSQI…LPSM). A sufficient for homodimerization region spans residues 216 to 717 (TASTGDANKW…QLPSMPQSDC (502 aa)).

In terms of assembly, homodimer. Interacts with OFD1; the interaction is direct. Interacts with FAM161A. Interacts with RABEP2, ERC1 and CEP131. In terms of tissue distribution, expressed in liver, kidney, spleen, brain, heart and muscle. Expressed in photoreceptor cells of the retina.

Its subcellular location is the cytoplasm. The protein localises to the cytoskeleton. It localises to the microtubule organizing center. The protein resides in the centrosome. It is found in the centriole. Its subcellular location is the cilium basal body. The protein localises to the cell junction. Plays a role in the establishment of cell polarity and epithelial lumen formation. Also plays an essential role in ciliogenesis and subsequent Hedgehog signaling pathway that requires the presence of intact primary cilia for pathway activation. Mechanistically, interacts with and mediates RABEP2 centrosomal localization which is critical for ciliogenesis. This is Serologically defined colon cancer antigen 8 homolog (Sdccag8) from Mus musculus (Mouse).